We begin with the raw amino-acid sequence, 151 residues long: Small ribosomal subunit protein eS6 (151 aa).

The protein belongs to the eukaryotic ribosomal protein eS6 family.

In Pyrobaculum calidifontis (strain DSM 21063 / JCM 11548 / VA1), this protein is Small ribosomal subunit protein eS6.